The following is a 91-amino-acid chain: Small ribosomal subunit protein uS19 (91 aa).

This sequence belongs to the universal ribosomal protein uS19 family.

Its function is as follows. Protein S19 forms a complex with S13 that binds strongly to the 16S ribosomal RNA. This chain is Small ribosomal subunit protein uS19, found in Verminephrobacter eiseniae (strain EF01-2).